Consider the following 387-residue polypeptide: 3-ketoacyl-CoA thiolase (387 aa).

The active-site Acyl-thioester intermediate is cysteine 91. Catalysis depends on proton acceptor residues histidine 343 and cysteine 373.

It belongs to the thiolase-like superfamily. Thiolase family. As to quaternary structure, heterotetramer of two alpha chains (FadB) and two beta chains (FadA).

It is found in the cytoplasm. The catalysed reaction is an acyl-CoA + acetyl-CoA = a 3-oxoacyl-CoA + CoA. Its pathway is lipid metabolism; fatty acid beta-oxidation. Functionally, catalyzes the final step of fatty acid oxidation in which acetyl-CoA is released and the CoA ester of a fatty acid two carbons shorter is formed. The polypeptide is 3-ketoacyl-CoA thiolase (Escherichia coli O9:H4 (strain HS)).